The following is a 625-amino-acid chain: Chaperone protein HtpG (625 aa).

Positions 1-332 (MSNKQNTAVQ…TEDLSLNVSR (332 aa)) are a; substrate-binding. The segment at 333–545 (EIVQSSPVMS…KDAMDSQMER (213 aa)) is b. The c stretch occupies residues 546–625 (MMKMMQQEMP…ELIEAATLSR (80 aa)).

It belongs to the heat shock protein 90 family. As to quaternary structure, homodimer.

The protein localises to the cytoplasm. Molecular chaperone. Has ATPase activity. This chain is Chaperone protein HtpG, found in Chlorobium luteolum (strain DSM 273 / BCRC 81028 / 2530) (Pelodictyon luteolum).